Consider the following 915-residue polypeptide: Probable dipeptidyl-aminopeptidase B (915 aa).

A disordered region spans residues 1–82 (MAPPFTDDPE…GAFLGPPGVP (82 aa)). The Cytoplasmic portion of the chain corresponds to 1 to 94 (MAPPFTDDPE…RQPMDRGFRR (94 aa)). Residues 15 to 32 (STSRLSQDSLSSVSTTSL) show a composition bias toward low complexity. The span at 36-62 (RIQEEMDRDPSASRSARRDLLPATKDE) shows a compositional bias: basic and acidic residues. A helical; Signal-anchor for type II membrane protein transmembrane segment spans residues 95 to 115 (ILIIIGAVFVGAWLAGLGIFV). Residues 116–915 (LSGSYKHESD…IDTKKRRHVS (800 aa)) lie on the Vacuolar side of the membrane. Residues asparagine 355 and asparagine 577 are each glycosylated (N-linked (GlcNAc...) asparagine). Residue serine 760 is the Charge relay system of the active site. N-linked (GlcNAc...) asparagine glycosylation is present at asparagine 819. Active-site charge relay system residues include aspartate 837 and histidine 870.

The protein belongs to the peptidase S9B family.

The protein resides in the vacuole membrane. The enzyme catalyses Release of an N-terminal dipeptide, Xaa-Yaa-|-Zaa-, from a polypeptide, preferentially when Yaa is Pro, provided Zaa is neither Pro nor hydroxyproline.. Type IV dipeptidyl-peptidase which removes N-terminal dipeptides sequentially from polypeptides having unsubstituted N-termini provided that the penultimate residue is proline. The sequence is that of Probable dipeptidyl-aminopeptidase B (DAPB) from Metarhizium robertsii (strain ARSEF 23 / ATCC MYA-3075) (Metarhizium anisopliae (strain ARSEF 23)).